Consider the following 178-residue polypeptide: Riboflavin kinase (178 aa).

Mg(2+)-binding residues include threonine 39 and asparagine 41. Catalysis depends on glutamate 116, which acts as the Nucleophile.

Belongs to the flavokinase family. The cofactor is Zn(2+). Mg(2+) is required as a cofactor.

It catalyses the reaction riboflavin + ATP = FMN + ADP + H(+). The protein operates within cofactor biosynthesis; FMN biosynthesis; FMN from riboflavin (ATP route): step 1/1. Functionally, catalyzes the phosphorylation of riboflavin (vitamin B2) to form flavin mononucleotide (FMN) coenzyme. The polypeptide is Riboflavin kinase (FMN1) (Scheffersomyces stipitis (strain ATCC 58785 / CBS 6054 / NBRC 10063 / NRRL Y-11545) (Yeast)).